We begin with the raw amino-acid sequence, 1051 residues long: Carbamoyl phosphate synthase large chain (1051 aa).

A carboxyphosphate synthetic domain region spans residues 1-399 (MKETPKKVLV…SLQKAVRMLD (399 aa)). Arginine 127, arginine 167, glycine 173, glycine 174, lysine 206, leucine 208, glutamate 213, glycine 239, valine 240, histidine 241, glutamine 282, and glutamate 296 together coordinate ATP. One can recognise an ATP-grasp 1 domain in the interval 131–325 (RETMIENNLP…LAYVSAKLAL (195 aa)). Mg(2+)-binding residues include glutamine 282, glutamate 296, and asparagine 298. Residues glutamine 282, glutamate 296, and asparagine 298 each coordinate Mn(2+). Positions 400 to 548 (IGEPGVVGGK…LTYNGTEDDL (149 aa)) are oligomerization domain. Residues 549–930 (EFSQGNKLLI…LKSWLSSIPN (382 aa)) form a carbamoyl phosphate synthetic domain region. The ATP-grasp 2 domain maps to 673-863 (SKLLDKLGIS…LINESMKAIF (191 aa)). ATP-binding residues include arginine 709, lysine 748, isoleucine 750, glutamate 755, glycine 779, valine 780, histidine 781, serine 782, glutamine 822, and glutamate 834. Mg(2+)-binding residues include glutamine 822, glutamate 834, and asparagine 836. Residues glutamine 822, glutamate 834, and asparagine 836 each contribute to the Mn(2+) site. The MGS-like domain maps to 930 to 1051 (NRIPNKNGIA…FEISEYGGGI (122 aa)). The interval 931–1051 (RIPNKNGIAL…FEISEYGGGI (121 aa)) is allosteric domain.

This sequence belongs to the CarB family. In terms of assembly, composed of two chains; the small (or glutamine) chain promotes the hydrolysis of glutamine to ammonia, which is used by the large (or ammonia) chain to synthesize carbamoyl phosphate. Tetramer of heterodimers (alpha,beta)4. Mg(2+) serves as cofactor. It depends on Mn(2+) as a cofactor.

The enzyme catalyses hydrogencarbonate + L-glutamine + 2 ATP + H2O = carbamoyl phosphate + L-glutamate + 2 ADP + phosphate + 2 H(+). The catalysed reaction is hydrogencarbonate + NH4(+) + 2 ATP = carbamoyl phosphate + 2 ADP + phosphate + 2 H(+). Its pathway is amino-acid biosynthesis; L-arginine biosynthesis; carbamoyl phosphate from bicarbonate: step 1/1. It participates in pyrimidine metabolism; UMP biosynthesis via de novo pathway; (S)-dihydroorotate from bicarbonate: step 1/3. Large subunit of the glutamine-dependent carbamoyl phosphate synthetase (CPSase). CPSase catalyzes the formation of carbamoyl phosphate from the ammonia moiety of glutamine, carbonate, and phosphate donated by ATP, constituting the first step of 2 biosynthetic pathways, one leading to arginine and/or urea and the other to pyrimidine nucleotides. The large subunit (synthetase) binds the substrates ammonia (free or transferred from glutamine from the small subunit), hydrogencarbonate and ATP and carries out an ATP-coupled ligase reaction, activating hydrogencarbonate by forming carboxy phosphate which reacts with ammonia to form carbamoyl phosphate. This chain is Carbamoyl phosphate synthase large chain, found in Saccharolobus islandicus (strain M.16.27) (Sulfolobus islandicus).